Consider the following 169-residue polypeptide: Regulator of ribonuclease activity A (169 aa).

Belongs to the RraA family. Homotrimer. Binds to both RNA-binding sites in the C-terminal region of Rne and to RhlB.

The protein resides in the cytoplasm. Its function is as follows. Globally modulates RNA abundance by binding to RNase E (Rne) and regulating its endonucleolytic activity. Can modulate Rne action in a substrate-dependent manner by altering the composition of the degradosome. Modulates RNA-binding and helicase activities of the degradosome. In Photorhabdus laumondii subsp. laumondii (strain DSM 15139 / CIP 105565 / TT01) (Photorhabdus luminescens subsp. laumondii), this protein is Regulator of ribonuclease activity A.